The following is a 706-amino-acid chain: Zinc transporter foi (706 aa).

Residues 1-21 (MARHIMAVCVVCLLCAHRLHC) form the signal peptide. Topologically, residues 22-261 (QDHIESLLGP…EKDKDIFYVW (240 aa)) are extracellular. A compositionally biased stretch (polar residues) spans 40 to 56 (QDQLNARVYTNLSPSSE). Residues 40–101 (QDQLNARVYT…HGPTSESRVP (62 aa)) are disordered. N-linked (GlcNAc...) asparagine glycosylation is found at Asn74, Asn119, Asn176, Asn182, Asn196, and Asn207. A helical transmembrane segment spans residues 262–282 (IYAFISVFACGILGLVGVAII). At 283–292 (PFMGSRYYKY) the chain is on the cytoplasmic side. The helical transmembrane segment at 293 to 313 (IIQYLVALAVGTMTGDALLHL) threads the bilayer. The Extracellular portion of the chain corresponds to 314 to 329 (LPHSLAGQDERGMIMK). A helical membrane pass occupies residues 330 to 350 (GLGCLGGIIFFYVMEHALTMI). At 351–604 (SEWRKSVEKK…LIKAGMSVKS (254 aa)) the chain is on the cytoplasmic side. Phosphoserine occurs at positions 376, 377, and 381. The chain crosses the membrane as a helical span at residues 605–625 (AVYYNLLTGVLSFIGMIFGIA). Topologically, residues 626–631 (FGQSQD) are extracellular. Residues 632-652 (VAQWMFAVAAGLFIYIALVDM) traverse the membrane as a helical segment. Residues 653–665 (MPEISASHKSLGQ) lie on the Cytoplasmic side of the membrane. A helical membrane pass occupies residues 666–686 (FLLQILGMLSGVGIMLLIALY). The Extracellular portion of the chain corresponds to 687 to 706 (EGDLMSAFGTAGAASHQHAH).

It belongs to the ZIP transporter (TC 2.A.5) family. Post-translationally, glycosylated. In terms of tissue distribution, maternal foi has almost completely disappeared by embryonic stage 3 except in the pole cells. In stage 6 embryos, expression is enriched in the invaginating mesoderm. In stage 9 embryos, high levels in the anterior and posterior midgut primordia. In stage 14 embryos, broad expression with low levels in the epidermis.

Its subcellular location is the cell membrane. Required for the normal migration of longitudinal and peripheral glial cells. During larval development, required for the migration of the subretinal glia into the eye disk. During embryonic development, also controls the migration of muscle cells toward their attachment sites. Required in the mesoderm for the correct morphogenesis of embryonic gonad and for tracheal branch fusion during tracheal development. Shg may be cooperating with foi to mediate a common mechanism for gonad and tracheal morphogenesis. Acts as a zinc transporter in both yeast and mammalian cells. The sequence is that of Zinc transporter foi from Drosophila melanogaster (Fruit fly).